The sequence spans 131 residues: Large ribosomal subunit protein eL32 (131 aa).

The tract at residues 39-77 (LGEKWRRPKGRHSKMRRKLKSKPKMPNPGYGSPKKVRGL) is disordered. Residues 44–61 (RRPKGRHSKMRRKLKSKP) are compositionally biased toward basic residues.

It belongs to the eukaryotic ribosomal protein eL32 family.

This chain is Large ribosomal subunit protein eL32 (rpl32), found in Methanopyrus kandleri (strain AV19 / DSM 6324 / JCM 9639 / NBRC 100938).